The chain runs to 350 residues: Beta-ketoacyl-[acyl-carrier-protein] synthase III (350 aa).

Catalysis depends on residues C120 and H256. Residues 257–261 (QANVR) form an ACP-binding region. Residue N286 is part of the active site.

This sequence belongs to the thiolase-like superfamily. FabH family. Homodimer.

The protein localises to the cytoplasm. It carries out the reaction malonyl-[ACP] + acetyl-CoA + H(+) = 3-oxobutanoyl-[ACP] + CO2 + CoA. The protein operates within lipid metabolism; fatty acid biosynthesis. Catalyzes the condensation reaction of fatty acid synthesis by the addition to an acyl acceptor of two carbons from malonyl-ACP. Catalyzes the first condensation reaction which initiates fatty acid synthesis and may therefore play a role in governing the total rate of fatty acid production. Possesses both acetoacetyl-ACP synthase and acetyl transacylase activities. Its substrate specificity determines the biosynthesis of branched-chain and/or straight-chain of fatty acids. This is Beta-ketoacyl-[acyl-carrier-protein] synthase III from Deinococcus deserti (strain DSM 17065 / CIP 109153 / LMG 22923 / VCD115).